We begin with the raw amino-acid sequence, 379 residues long: MSQEVIRGIALPPPAQPGDPLARVDTPSLVLDLAPFEANLRAMQAWADRHDVALRPHAKAHKCPEIALRQLALGARGICCQKVSEALPFVAAGIQDIHISNEVVGPAKLALLGQLARVAKISVCVDNAHNLSQVSQAMVQAGAQIDVLVEVDVGQGRCGVSDDALVLALAQQARDLPGVNFAGLQAYHGSVQHYRTREERAEVCRQAARIAASYAQLLRESGIACDTITGGGTGSAEFDAASGVYTELQAGSYAFMDGDYGANEWDGPLAFENSLFVLATVMSKPAPDRVILDAGLKSTTAECGPPAIFGEPGLTYTAINDEHGVVRVEPGAQAPDLGAVLRLVPSHVDPTFNLHDGLVVVRDGVVEDIWEISARGFSR.

K59 bears the N6-(pyridoxal phosphate)lysine mark.

Belongs to the DSD1 family. It depends on pyridoxal 5'-phosphate as a cofactor. Requires Mn(2+) as cofactor. Co(2+) serves as cofactor. The cofactor is Ni(2+). Mg(2+) is required as a cofactor.

It carries out the reaction D-threonine = acetaldehyde + glycine. It catalyses the reaction D-allo-threonine = acetaldehyde + glycine. Its activity is regulated as follows. Inhibited by the carbonyl reagents hydroxylamine, phenylhydrazine and semicarbazide. Inhibited by the chelating agent EDTA. Inhibited by the sulfhydryl reagent p-chloromercuribenzoic acid, and by sodium cyanide. Inhibited by iodoacetate, Ag(2)SO(4), HgCl(2) and CdCl(2). Competitively inhibited by beta-hydroxyaspartate and O-phospho-DL-threonine. In terms of biological role, catalyzes the reversible cleavage of D-threonine or D-allothreonine into glycine and acetaldehyde. Can also cleave D-beta-phenylserine, D-beta-hydroxy-alpha-aminovaleric acid, D-beta-3,4-dihydroxyphenylserine and D-beta-3,4-methylenedioxyphenylserine into glycine and the corresponding aldehyde compounds. Inactive towards D-serine, beta-hydroxyaspartate and O-phospho-DL-threonine. In Arthrobacter sp, this protein is D-threonine aldolase.